Consider the following 272-residue polypeptide: Catabolic 3-dehydroquinate dehydratase (272 aa).

Residues 66–68 and R102 contribute to the 3-dehydroquinate site; that span reads EFR. The Proton donor/acceptor role is filled by H163. Residue K190 is the Schiff-base intermediate with substrate of the active site. 3-dehydroquinate contacts are provided by R232, S251, and Q255.

Belongs to the type-I 3-dehydroquinase family.

The enzyme catalyses 3-dehydroquinate = 3-dehydroshikimate + H2O. It participates in aromatic compound metabolism; 3,4-dihydroxybenzoate biosynthesis; 3,4-dihydroxybenzoate from 3-dehydroquinate: step 1/2. Functionally, involved in the biosynthesis of protocatechuate. Catalyzes the catabolic dehydration of 3-dehydroquinate (DHQ) to yield 3-dehydroshikimate. The protein is Catabolic 3-dehydroquinate dehydratase of Acinetobacter baylyi (strain ATCC 33305 / BD413 / ADP1).